The sequence spans 404 residues: Cysteine desulfurase IscS (404 aa).

Pyridoxal 5'-phosphate contacts are provided by residues 75-76 (AT), N155, Q183, and 203-205 (SGH). K206 is modified (N6-(pyridoxal phosphate)lysine). T243 provides a ligand contact to pyridoxal 5'-phosphate. C328 acts as the Cysteine persulfide intermediate in catalysis. C328 contacts [2Fe-2S] cluster.

This sequence belongs to the class-V pyridoxal-phosphate-dependent aminotransferase family. NifS/IscS subfamily. Homodimer. Forms a heterotetramer with IscU, interacts with other sulfur acceptors. Pyridoxal 5'-phosphate is required as a cofactor.

It is found in the cytoplasm. The catalysed reaction is (sulfur carrier)-H + L-cysteine = (sulfur carrier)-SH + L-alanine. It functions in the pathway cofactor biosynthesis; iron-sulfur cluster biosynthesis. Functionally, master enzyme that delivers sulfur to a number of partners involved in Fe-S cluster assembly, tRNA modification or cofactor biosynthesis. Catalyzes the removal of elemental sulfur atoms from cysteine to produce alanine. Functions as a sulfur delivery protein for Fe-S cluster synthesis onto IscU, an Fe-S scaffold assembly protein, as well as other S acceptor proteins. This Mannheimia succiniciproducens (strain KCTC 0769BP / MBEL55E) protein is Cysteine desulfurase IscS.